The primary structure comprises 209 residues: Transcription elongation factor A protein-like 4 (209 aa).

M1 is modified (N-acetylmethionine). Residues 1 to 125 are disordered; sequence MEKLYNENEG…VPRKAKRKTN (125 aa). Residues 25–96 are compositionally biased toward basic and acidic residues; it reads QDERKPEVAC…GSEREGKPES (72 aa). A phosphoserine mark is found at S88 and S96.

Belongs to the TFS-II family. TFA subfamily.

It localises to the nucleus. Its function is as follows. May be involved in transcriptional regulation. This Pongo abelii (Sumatran orangutan) protein is Transcription elongation factor A protein-like 4 (TCEAL4).